The chain runs to 478 residues: Cytochrome c-552 (478 aa).

Positions 1 to 26 are cleaved as a signal peptide; sequence MTRIKINARRIFSLLIPFFFFTSVHA. H94 lines the heme c pocket. C122, C125, and K126 together coordinate heme. Positions 160, 163, 164, 209, 212, and 213 each coordinate heme c. E215, Y216, K261, and Q263 together coordinate Ca(2+). Y216 contacts substrate. H264 contacts substrate. Heme c-binding residues include H275, C282, C285, H286, H301, C314, C317, H318, and H393.

It belongs to the cytochrome c-552 family. Ca(2+) is required as a cofactor. Requires heme c as cofactor.

It is found in the periplasm. It catalyses the reaction 6 Fe(III)-[cytochrome c] + NH4(+) + 2 H2O = 6 Fe(II)-[cytochrome c] + nitrite + 8 H(+). It participates in nitrogen metabolism; nitrate reduction (assimilation). In terms of biological role, catalyzes the reduction of nitrite to ammonia, consuming six electrons in the process. The polypeptide is Cytochrome c-552 (Escherichia coli O6:H1 (strain CFT073 / ATCC 700928 / UPEC)).